Reading from the N-terminus, the 425-residue chain is Glutamate-1-semialdehyde 2,1-aminomutase (425 aa).

Lys265 is subject to N6-(pyridoxal phosphate)lysine.

The protein belongs to the class-III pyridoxal-phosphate-dependent aminotransferase family. HemL subfamily. As to quaternary structure, homodimer. Requires pyridoxal 5'-phosphate as cofactor.

Its subcellular location is the cytoplasm. The enzyme catalyses (S)-4-amino-5-oxopentanoate = 5-aminolevulinate. It participates in porphyrin-containing compound metabolism; protoporphyrin-IX biosynthesis; 5-aminolevulinate from L-glutamyl-tRNA(Glu): step 2/2. The chain is Glutamate-1-semialdehyde 2,1-aminomutase from Nitrosospira multiformis (strain ATCC 25196 / NCIMB 11849 / C 71).